The primary structure comprises 863 residues: Valine--tRNA ligase (863 aa).

The 'HIGH' region signature appears at 43-53; that stretch reads PYPTGSFHIGH. The 'KMSKS' region signature appears at 517–521; that stretch reads KMSKS. An ATP-binding site is contributed by lysine 520.

The protein belongs to the class-I aminoacyl-tRNA synthetase family. ValS type 2 subfamily.

The protein resides in the cytoplasm. It catalyses the reaction tRNA(Val) + L-valine + ATP = L-valyl-tRNA(Val) + AMP + diphosphate. Its function is as follows. Catalyzes the attachment of valine to tRNA(Val). As ValRS can inadvertently accommodate and process structurally similar amino acids such as threonine, to avoid such errors, it has a 'posttransfer' editing activity that hydrolyzes mischarged Thr-tRNA(Val) in a tRNA-dependent manner. The protein is Valine--tRNA ligase of Archaeoglobus fulgidus (strain ATCC 49558 / DSM 4304 / JCM 9628 / NBRC 100126 / VC-16).